Here is a 108-residue protein sequence, read N- to C-terminus: ATP synthase peripheral stalk subunit F6, mitochondrial (108 aa).

The N-terminal 32 residues, Met1 to Phe32, are a transit peptide targeting the mitochondrion. An N6-acetyllysine mark is found at Lys41, Lys46, and Lys79. Lys84 and Lys99 each carry N6-acetyllysine; alternate. 2 positions are modified to N6-succinyllysine; alternate: Lys84 and Lys99. Position 105 is an N6-acetyllysine (Lys105). Ser108 is subject to Phosphoserine.

It belongs to the eukaryotic ATPase subunit F6 family. As to quaternary structure, component of the ATP synthase complex composed at least of ATP5F1A/subunit alpha, ATP5F1B/subunit beta, ATP5MC1/subunit c (homooctomer), MT-ATP6/subunit a, MT-ATP8/subunit 8, ATP5ME/subunit e, ATP5MF/subunit f, ATP5MG/subunit g, ATP5MK/subunit k, ATP5MJ/subunit j, ATP5F1C/subunit gamma, ATP5F1D/subunit delta, ATP5F1E/subunit epsilon, ATP5PF/subunit F6, ATP5PB/subunit b, ATP5PD/subunit d, ATP5PO/subunit OSCP. ATP synthase complex consists of a soluble F(1) head domain (subunits alpha(3) and beta(3)) - the catalytic core - and a membrane F(0) domain - the membrane proton channel (subunits c, a, 8, e, f, g, k and j). These two domains are linked by a central stalk (subunits gamma, delta, and epsilon) rotating inside the F1 region and a stationary peripheral stalk (subunits F6, b, d, and OSCP).

It localises to the mitochondrion. It is found in the mitochondrion inner membrane. Its function is as follows. Subunit F6, of the mitochondrial membrane ATP synthase complex (F(1)F(0) ATP synthase or Complex V) that produces ATP from ADP in the presence of a proton gradient across the membrane which is generated by electron transport complexes of the respiratory chain. ATP synthase complex consist of a soluble F(1) head domain - the catalytic core - and a membrane F(1) domain - the membrane proton channel. These two domains are linked by a central stalk rotating inside the F(1) region and a stationary peripheral stalk. During catalysis, ATP synthesis in the catalytic domain of F(1) is coupled via a rotary mechanism of the central stalk subunits to proton translocation. In vivo, can only synthesize ATP although its ATP hydrolase activity can be activated artificially in vitro. Part of the complex F(0) domain. Part of the complex F(0) domain and the peripheric stalk, which acts as a stator to hold the catalytic alpha(3)beta(3) subcomplex and subunit a/ATP6 static relative to the rotary elements. This chain is ATP synthase peripheral stalk subunit F6, mitochondrial, found in Bos taurus (Bovine).